A 679-amino-acid polypeptide reads, in one-letter code: Single-strand DNA endonuclease ASTE1 (679 aa).

An interaction with SHLD2 region spans residues 351 to 400 (TILPTQVENMQQPNAHRISQPIRQIIYGLLLNASPHLDKTSWNALPPQPL). The tract at residues 625 to 645 (RSNSKKKRQKKQNTSCSKNRG) is disordered. Over residues 626 to 635 (SNSKKKRQKK) the composition is skewed to basic residues.

It belongs to the asteroid family. In terms of assembly, interacts with SHLD1, SHLD2, SHLD3, RIF1 and MAD2L2/REV7.

In terms of biological role, structure-specific DNA endonuclease that specifically cleaves single-stranded DNA and 3' overhang DNA. Contributes to the control of DNA double-strand break repair choice by antagonizing BRCA1-dependent homologous recombination (HR) and promoting non-homologous end-joining (NHEJ). Recruited to the single-stranded DNA ends by SHLD2 and cleaves the 3' exposed DNA ends, therefore inhibiting DNA end resection (necessary for HR) and promoting DNA end protection (necessary for NHEJ). The polypeptide is Single-strand DNA endonuclease ASTE1 (ASTE1) (Homo sapiens (Human)).